Reading from the N-terminus, the 185-residue chain is Elongation factor P (185 aa).

This sequence belongs to the elongation factor P family.

The protein resides in the cytoplasm. It functions in the pathway protein biosynthesis; polypeptide chain elongation. Involved in peptide bond synthesis. Stimulates efficient translation and peptide-bond synthesis on native or reconstituted 70S ribosomes in vitro. Probably functions indirectly by altering the affinity of the ribosome for aminoacyl-tRNA, thus increasing their reactivity as acceptors for peptidyl transferase. This chain is Elongation factor P, found in Synechococcus sp. (strain JA-2-3B'a(2-13)) (Cyanobacteria bacterium Yellowstone B-Prime).